A 300-amino-acid polypeptide reads, in one-letter code: Erythroblast NAD(P)(+)--arginine ADP-ribosyltransferase (300 aa).

Residues 1-22 (MEEPLLHAILGLVLLLSTRTDA) form the signal peptide. 2 disulfides stabilise this stretch: C51-C260 and C159-C208. The TR mART core domain maps to 70 to 256 (ETFAEGWRSA…IQLRSQGKSS (187 aa)). Residues Y107, R164, and Q183 each coordinate NAD(+). R164 is a catalytic residue. S186 is a catalytic residue. Residue S217 participates in NAD(+) binding. E224 is a catalytic residue. Residues 276–300 (SADKSSPLPRSPWPGWAPLAAPHSH) form a disordered region.

This sequence belongs to the Arg-specific ADP-ribosyltransferase family.

The catalysed reaction is L-arginyl-[protein] + NAD(+) = N(omega)-(ADP-D-ribosyl)-L-arginyl-[protein] + nicotinamide + H(+). The chain is Erythroblast NAD(P)(+)--arginine ADP-ribosyltransferase (MADPRT) from Gallus gallus (Chicken).